A 1746-amino-acid polypeptide reads, in one-letter code: Non-reducing polyketide synthase ptaA (1746 aa).

An N-terminal acylcarrier protein transacylase domain (SAT) region spans residues 4 to 227 (NSGSGTSPWG…ALPVYGGLCH (224 aa)). Residues 361-796 (QSKIAIVGMS…GGNTTIAIEE (436 aa)) form the Ketosynthase family 3 (KS3) domain. Active-site for beta-ketoacyl synthase activity residues include Cys534, His670, and His714. The tract at residues 898-1218 (FAFTGQGASY…LGALHLAGIP (321 aa)) is malonyl-CoA:ACP transacylase (MAT) domain. Residues 1286–1605 (TSTVHRVIGE…RLLLDRFFSA (320 aa)) are product template (PT) domain. The segment at 1290–1425 (HRVIGETFDG…ATLFYGKAND (136 aa)) is N-terminal hotdog fold. In terms of domain architecture, PKS/mFAS DH spans 1290-1600 (HRVIGETFDG…FRRYPRLLLD (311 aa)). Catalysis depends on His1322, which acts as the Proton acceptor; for dehydratase activity. The interval 1452–1600 (VANRFSRNMA…FRRYPRLLLD (149 aa)) is C-terminal hotdog fold. Asp1511 serves as the catalytic Proton donor; for dehydratase activity. Residues 1671–1745 (DSITVKAMAL…DLRAWLLEYY (75 aa)) form the Carrier domain. Ser1705 is subject to O-(pantetheine 4'-phosphoryl)serine.

The enzyme catalyses holo-[ACP] + 8 malonyl-CoA + 8 H(+) = atrochrysone carboxyl-[ACP] + 8 CO2 + 8 CoA + 2 H2O. It functions in the pathway secondary metabolite biosynthesis. Its function is as follows. Non-reducing polyketide synthase; part of the gene cluster that mediates the biosynthesis of pestheic acid, a diphenyl ether which is a biosynthetic precursor of the unique chloropupukeananes. The biosynthesis initiates from condensation of acetate and malonate units catalyzed by the non-reducing PKS ptaA. As the ptaA protein is TE/CLC domain-deficient, hydrolysis and Claisen cyclization of the polyketide could be catalyzed by ptaB containing a beta-lactamase domain. The ptaB protein might hydrolyze the thioester bond between the ACP of ptaA and the intermediate to release atrochrysone carboxylic acid, which is spontaneously dehydrated to form endocrocin anthrone. Endocrocin anthrone is then converted to endocrocin, catalyzed by the anthrone oxygenase ptaC. Spontaneous decarboxylation of endocrocin occurs to generate emodin. An O-methyltransferase (ptaH or ptaI) could methylate emodin to form physcion. PtaJ could then catalyze the oxidative cleavage of physcion, and rotation of the intermediate could then afford desmethylisosulochrin. PtaF, a putative NADH-dependent oxidoreductase, might also participate in the oxidative cleavage step. Desmethylisosulochrin is then transformed by another O-methyltransferase (ptaH or ptaI) to form isosulochrin. Chlorination of isosulochrin by ptaM in the cyclohexadienone B ring then produces chloroisosulochrin. PtaE is responsible for the oxidative coupling reactions of both benzophenones isosulochrin and chloroisosulochrin to RES-1214-1 and pestheic acid respectively, regardless of chlorination. The polypeptide is Non-reducing polyketide synthase ptaA (Pestalotiopsis fici (strain W106-1 / CGMCC3.15140)).